The sequence spans 576 residues: Proline--tRNA ligase (576 aa).

The protein belongs to the class-II aminoacyl-tRNA synthetase family. ProS type 1 subfamily. As to quaternary structure, homodimer.

It is found in the cytoplasm. It catalyses the reaction tRNA(Pro) + L-proline + ATP = L-prolyl-tRNA(Pro) + AMP + diphosphate. Catalyzes the attachment of proline to tRNA(Pro) in a two-step reaction: proline is first activated by ATP to form Pro-AMP and then transferred to the acceptor end of tRNA(Pro). As ProRS can inadvertently accommodate and process non-cognate amino acids such as alanine and cysteine, to avoid such errors it has two additional distinct editing activities against alanine. One activity is designated as 'pretransfer' editing and involves the tRNA(Pro)-independent hydrolysis of activated Ala-AMP. The other activity is designated 'posttransfer' editing and involves deacylation of mischarged Ala-tRNA(Pro). The misacylated Cys-tRNA(Pro) is not edited by ProRS. The polypeptide is Proline--tRNA ligase (Trichlorobacter lovleyi (strain ATCC BAA-1151 / DSM 17278 / SZ) (Geobacter lovleyi)).